Here is a 133-residue protein sequence, read N- to C-terminus: MTLNLCVLTPNRTVWNSKVNEIILSTNSGQIGVLPNHASVATAVDIGILKIRLDGQWLTMALMGGFAIIGNNEITVLVNDAEKGSDIDSQEAQQTLEIAEANFRKAEGKRQKIEANLALRRARTRVETINAIS.

The protein belongs to the ATPase epsilon chain family. In terms of assembly, F-type ATPases have 2 components, CF(1) - the catalytic core - and CF(0) - the membrane proton channel. CF(1) has five subunits: alpha(3), beta(3), gamma(1), delta(1), epsilon(1). CF(0) has three main subunits: a, b and c.

It is found in the plastid. The protein resides in the chloroplast thylakoid membrane. Its function is as follows. Produces ATP from ADP in the presence of a proton gradient across the membrane. This is ATP synthase epsilon chain, chloroplastic from Daucus carota (Wild carrot).